A 551-amino-acid chain; its full sequence is Arginine--tRNA ligase (551 aa).

The 'HIGH' region motif lies at 123–133 (ANPTGPLTIGR).

This sequence belongs to the class-I aminoacyl-tRNA synthetase family. In terms of assembly, monomer.

The protein localises to the cytoplasm. The catalysed reaction is tRNA(Arg) + L-arginine + ATP = L-arginyl-tRNA(Arg) + AMP + diphosphate. The chain is Arginine--tRNA ligase from Chlorobium limicola (strain DSM 245 / NBRC 103803 / 6330).